Consider the following 58-residue polypeptide: Small ribosomal subunit protein uS14 (58 aa).

Residues 1–21 (MSESETEQTGEHASHRTGQTH) form a disordered region. Over residues 9-21 (TGEHASHRTGQTH) the composition is skewed to basic and acidic residues. Zn(2+)-binding residues include Cys23, Cys26, Cys41, and Cys44.

The protein belongs to the universal ribosomal protein uS14 family. Zinc-binding uS14 subfamily. In terms of assembly, part of the 30S ribosomal subunit. The cofactor is Zn(2+).

Binds 16S rRNA, required for the assembly of 30S particles. The sequence is that of Small ribosomal subunit protein uS14 from Haloquadratum walsbyi (strain DSM 16790 / HBSQ001).